The chain runs to 318 residues: Protein RecA (318 aa).

Residue 53-60 participates in ATP binding; that stretch reads GPESSGKT.

Belongs to the RecA family.

It localises to the cytoplasm. Its function is as follows. Can catalyze the hydrolysis of ATP in the presence of single-stranded DNA, the ATP-dependent uptake of single-stranded DNA by duplex DNA, and the ATP-dependent hybridization of homologous single-stranded DNAs. It interacts with LexA causing its activation and leading to its autocatalytic cleavage. The polypeptide is Protein RecA (Bacteroides fragilis (strain YCH46)).